Here is a 657-residue protein sequence, read N- to C-terminus: MKVFSLILIAFVANAYCDEGASTEKEEKMGTIIGIDLGTTYSCVGVFKNGRVEIIANDQGNRITPSYVAFSGDQGERLIGDAAKNQLTINPENTIFDAKRLIGRFYNEKTVQQDIKHWPFKIVDKSNKPNVEVKVGSETKQFTPEEVSAMVLTKMKQIAESYLGHEVKNAVVTVPAYFNDAQKQATKDAGSIAGLNVVRIINEPTAAAIAYGLDKKDGERNILVFDLGGGTFDVSLLTIDSGVFEVLATNGDTHLGGEDFDQRVMEYFIKLYKKKSGKDLRKDNRAVQKLRREVEKAKRALSTQHQTKIEIESLFDGEDFSETLTRAKFEELNMDLFRATLKPVQKVLEDADMKKTDVHEIVLVGGSTRIPKVQQLIKDYFNGKEPSRGINPDEAVAYGAAVQAGVIGGVENTGDVVLLDVNPLTLGIETVGGVMTKLIGRNTVIPTKKSQVFSTAADSQSAVSIVIYEGERPMVMDNHKLGNFDVTGIPPAPRGVPQIEVTFEIDVNGILHVSAEDKGTGNKNKLTITNDHNRLSPEDIERMINDADKFAADDQAQKEKVESRNELEAYAYQMKTQIADKEKLGGKLTDEDKVSIESAVERAIEWLGSNQDASTEENKEQKKELESVVQPIVSKLYSAGGQGEQASEEPSEDHDEL.

The N-terminal stretch at 1 to 17 (MKVFSLILIAFVANAYC) is a signal peptide. ATP contacts are provided by residues 38–41 (GTTY), Lys-99, 229–231 (GGT), 295–302 (EKAKRALS), and 366–369 (GSTR). Residues 128-282 (KPNVEVKVGS…KKKSGKDLRK (155 aa)) are nucleotide-binding (NBD). A substrate-binding (SBD) region spans residues 402-502 (VQAGVIGGVE…PRGVPQIEVT (101 aa)). Residues 607–657 (LGSNQDASTEENKEQKKELESVVQPIVSKLYSAGGQGEQASEEPSEDHDEL) are disordered. Over residues 616–626 (EENKEQKKELE) the composition is skewed to basic and acidic residues. The span at 646-657 (ASEEPSEDHDEL) shows a compositional bias: acidic residues. The Prevents secretion from ER motif lies at 654-657 (HDEL).

This sequence belongs to the heat shock protein 70 family.

The protein resides in the endoplasmic reticulum lumen. The catalysed reaction is ATP + H2O = ADP + phosphate + H(+). With respect to regulation, the chaperone activity is regulated by ATP-induced allosteric coupling of the nucleotide-binding (NBD) and substrate-binding (SBD) domains. In the ADP-bound and nucleotide-free (apo) states, the two domains have little interaction. In contrast, in the ATP-bound state the two domains are tightly coupled, which results in drastically accelerated kinetics in both binding and release of polypeptide substrates. J domain-containing co-chaperones stimulate the ATPase activity and are required for efficient substrate recognition. In terms of biological role, endoplasmic reticulum chaperone that plays a key role in protein folding and quality control in the endoplasmic reticulum lumen. Required for ER dynamics during the first embryonic cell divisions. Specifically, controls ER transition into sheet-like structures at the onset of mitosis, possibly by regulating homotypic membrane fusion. The sequence is that of Endoplasmic reticulum chaperone BiP homolog (hsp-4) from Caenorhabditis elegans.